The following is a 2151-amino-acid chain: Calpain-type cysteine protease DEK1 (2151 aa).

A signal peptide spans 1-32; that stretch reads MEGDERGVLLACVISGTLFTVFGSGSFWILWA. Residues 33-69 lie on the Extracellular side of the membrane; sequence VNWRPWRLYSWIFARKWPKVLQGPQLDILCGVLSLFA. A helical transmembrane segment spans residues 70-90; that stretch reads WIVVVSPIAILIGWGSWLIVI. At 91-94 the chain is on the cytoplasmic side; sequence LDRH. Residues 95–115 traverse the membrane as a helical segment; that stretch reads IIGLAIIMAGTALLLAFYSIM. The Extracellular segment spans residues 116–126; sequence LWWRTQWQSSR. The helical transmembrane segment at 127–147 threads the bilayer; it reads AVALLLLLGVALLCAYELCAV. The Cytoplasmic portion of the chain corresponds to 148 to 163; the sequence is YVTAGAHASQQYSPSG. A helical membrane pass occupies residues 164–184; sequence FFFGVSAIALAINMLFICRMV. Residues 185 to 235 are Extracellular-facing; it reads FNGNGLDVDEYVRRAYKFAYSDCIEVGPVACLPEPPDPNELYPRQTSRASH. A helical transmembrane segment spans residues 236-256; it reads LGLLYLGSLVVLLAYSVLYGL. At 257–263 the chain is on the cytoplasmic side; it reads TARESRW. The helical transmembrane segment at 264 to 284 threads the bilayer; that stretch reads LGGITSAAVIVLDWNIGACLY. Residues 285–293 are Extracellular-facing; sequence GFKLLQNRV. Residues 294 to 314 traverse the membrane as a helical segment; the sequence is LALFVAGISRLFLICFGIHYW. Residues 315–319 are Cytoplasmic-facing; that stretch reads YLGHC. Residues 320 to 340 traverse the membrane as a helical segment; the sequence is ISYIFVASVLSGAAVSRHLSI. Over 341-615 the chain is Extracellular; that stretch reads TDPSAARRDA…LLLHHVAGTP (275 aa). Disordered stretches follow at residues 363 to 393 and 405 to 442; these read RRKEQNSSSSSSDGCGSSIKRSSSIDAGHTG and CTADNLTRTGSSQEGINSDKSEESGRPSLGLRSSSCRS. A compositionally biased stretch (low complexity) spans 369–388; it reads SSSSSSDGCGSSIKRSSSID. Polar residues predominate over residues 405 to 420; the sequence is CTADNLTRTGSSQEGI. The segment covering 430–442 has biased composition (low complexity); that stretch reads RPSLGLRSSSCRS. The helical transmembrane segment at 616–636 threads the bilayer; that stretch reads ERAWGLFSLVFILETIIVAIF. Topologically, residues 637–652 are cytoplasmic; the sequence is RPKTITIINSSHQQFE. The helical transmembrane segment at 653-673 threads the bilayer; sequence FGFSVLLLSPVVCSIMAFLRS. The Extracellular portion of the chain corresponds to 674–686; it reads LQVEEMALTSKSR. A helical transmembrane segment spans residues 687 to 707; it reads KYGFVAWLLSTSVGLSLSFLS. The Cytoplasmic portion of the chain corresponds to 708 to 711; sequence KSSV. The helical transmembrane segment at 712–732 threads the bilayer; that stretch reads LLGISLTVPLMAACLSIAVPI. At 733–760 the chain is on the extracellular side; that stretch reads WMHNGYQFWVPQLSCGDQARDLRSPRIK. The chain crosses the membrane as a helical span at residues 761-782; the sequence is GFILWICVVLFAGSVISLGAII. The Cytoplasmic segment spans residues 783-813; the sequence is SAKPLDDLKYKLFSARENNVTSPYTSSVYLG. Residues 814 to 834 traverse the membrane as a helical segment; that stretch reads WAMSSGIALVVTAILPIVSWF. Residues 835–844 are Extracellular-facing; sequence ATYRFSHSSA. Residues 845 to 865 form a helical membrane-spanning segment; that stretch reads VCLMIFSVVLVAFCGTSYLEV. At 866 to 878 the chain is on the cytoplasmic side; that stretch reads VKSRDDQLPTKGD. The helical transmembrane segment at 879-899 threads the bilayer; the sequence is FLAALLPLACIPALLSLCCGM. Residues 900–912 are Extracellular-facing; that stretch reads VKWKDDCWILSRG. The helical transmembrane segment at 913–933 threads the bilayer; it reads VYVFFSIGLLLLFGAIAAVIA. The Cytoplasmic portion of the chain corresponds to 934–936; the sequence is VKP. The helical transmembrane segment at 937-957 threads the bilayer; that stretch reads WTIGVSFLLVLFLMVVTIGVI. The Extracellular portion of the chain corresponds to 958 to 971; sequence HLWASNNFYLTRKQ. The chain crosses the membrane as a helical span at residues 972-992; that stretch reads TSFVCFLALLLGLAAFLLGWH. The Cytoplasmic portion of the chain corresponds to 993–1006; the sequence is QDKAFAGASVGYFT. Residues 1007-1027 form a helical membrane-spanning segment; it reads FLSLLAGRALAVLLSPPIVVY. Residues 1028-1050 are Extracellular-facing; the sequence is SPRVLPVYVYDAHADCGKNVSAA. The helical transmembrane segment at 1051-1071 threads the bilayer; the sequence is FLVLYGIALATEGWGVVASLI. Topologically, residues 1072-2151 are cytoplasmic; the sequence is IYPPFAGAAV…TKASIVLEAL (1080 aa). 2 consecutive Calpain catalytic domains span residues 1407–1600 and 1695–1997; these read SGKH…DMID and QFTD…CRVY. Active-site residues include cysteine 1761, histidine 1919, and asparagine 1939.

Belongs to the peptidase C2 family. Autocatalytic proteolytic cleavage leading to the production of mainly cytoplasmic localized subproducts of about 85 and 120 kDa. In terms of tissue distribution, mostly expressed in meristems and organ primordia. Expressed at low levels in young and germinating seeds at 10 ppm and in seedling roots at 67 ppm. Present in most tissues at a low level.

The protein resides in the cell membrane. Its subcellular location is the endosome membrane. It is found in the endoplasmic reticulum membrane. It localises to the cytoplasm. Essential protease involved in epiderm development. Required for aleurone cell development in the endosperm probably by maintaining and restricting the aleurone and embryonic epidermal L1 cell-layer fates as well as meristems organization. Involved in the maintenance of adaxial/abaxial axis information in developing leaves, probably by regulating cell proliferation and expansion. Does not need calcium ions to be active. Required for the formation of giant cells in sepals by determining cell fate and promoting endoreplication. The polypeptide is Calpain-type cysteine protease DEK1 (Arabidopsis thaliana (Mouse-ear cress)).